The chain runs to 220 residues: Small ribosomal subunit protein uS2 (220 aa).

Positions 201-220 are disordered; the sequence is LPPDGDLPEPPSEFEVKFKR.

It belongs to the universal ribosomal protein uS2 family.

This Staphylothermus marinus (strain ATCC 43588 / DSM 3639 / JCM 9404 / F1) protein is Small ribosomal subunit protein uS2.